Consider the following 75-residue polypeptide: Small ribosomal subunit protein bS18 (75 aa).

Belongs to the bacterial ribosomal protein bS18 family. In terms of assembly, part of the 30S ribosomal subunit. Forms a tight heterodimer with protein bS6.

Binds as a heterodimer with protein bS6 to the central domain of the 16S rRNA, where it helps stabilize the platform of the 30S subunit. In Buchnera aphidicola subsp. Cinara cedri (strain Cc), this protein is Small ribosomal subunit protein bS18.